A 201-amino-acid polypeptide reads, in one-letter code: Large ribosomal subunit protein bL25 (201 aa).

Belongs to the bacterial ribosomal protein bL25 family. CTC subfamily. As to quaternary structure, part of the 50S ribosomal subunit; part of the 5S rRNA/L5/L18/L25 subcomplex. Contacts the 5S rRNA. Binds to the 5S rRNA independently of L5 and L18.

In terms of biological role, this is one of the proteins that binds to the 5S RNA in the ribosome where it forms part of the central protuberance. This is Large ribosomal subunit protein bL25 from Ectopseudomonas mendocina (strain ymp) (Pseudomonas mendocina).